A 123-amino-acid chain; its full sequence is MDRVPFCCLLFVGLLNPLLSFPVTDTGEMSLQLPVLEENALRALEELERTALLQTLRQTVGTEAEGSLGQADPSAETPTPRGSLRKALTGQDSNTVLSRLLARTRKQRKQHGTAPECFWKYCI.

An N-terminal signal peptide occupies residues 1-20; sequence MDRVPFCCLLFVGLLNPLLS. The propeptide occupies 21–104; the sequence is FPVTDTGEMS…TVLSRLLART (84 aa). The segment at 63 to 91 is disordered; it reads EAEGSLGQADPSAETPTPRGSLRKALTGQ. The cysteines at positions 117 and 122 are disulfide-linked.

This sequence belongs to the urotensin-2 family. As to expression, brain specific.

It is found in the secreted. In terms of biological role, highly potent vasoconstrictor. This is Urotensin-2 (Uts2) from Rattus norvegicus (Rat).